A 273-amino-acid polypeptide reads, in one-letter code: Chondrolectin (273 aa).

The signal sequence occupies residues 1 to 21; the sequence is MIRIASLLLGAALLCAQGAFA. Topologically, residues 22-216 are extracellular; that stretch reads RRVVSGQKVC…VVTEAGIIPN (195 aa). One can recognise a C-type lectin domain in the interval 35-179; sequence VKHPCYKMAY…CNMKHNYICK (145 aa). Intrachain disulfides connect cysteine 61-cysteine 178 and cysteine 144-cysteine 170. N-linked (GlcNAc...) asparagine glycosylation occurs at asparagine 86. Residues 217–237 traverse the membrane as a helical segment; it reads LIYVIIPTIPLLLLILVALGT. Over 238–273 the chain is Cytoplasmic; that stretch reads CCFQMLHKSKGRSKTSPNQSTLWISKSTRKESGMEV. Residues 247–273 form a disordered region; that stretch reads KGRSKTSPNQSTLWISKSTRKESGMEV. Residues 251–263 are compositionally biased toward polar residues; the sequence is KTSPNQSTLWISK.

As to quaternary structure, interacts with RABGGTB. In terms of tissue distribution, in adult mice preferentially expressed in skeletal muscle, testis, brain, and lung. Expressed in striated muscle (at protein level). Expressed in spinal cord. Detected in spinal cord fast motor neurons (at protein level).

It localises to the membrane. May play a role in the development of the nervous system such as in neurite outgrowth and elongation. May be involved in motor axon growth and guidance. In Mus musculus (Mouse), this protein is Chondrolectin (Chodl).